The primary structure comprises 313 residues: Carbamate kinase 2 (313 aa).

Belongs to the carbamate kinase family.

The protein resides in the cytoplasm. It carries out the reaction hydrogencarbonate + NH4(+) + ATP = carbamoyl phosphate + ADP + H2O + H(+). It functions in the pathway metabolic intermediate metabolism; carbamoyl phosphate degradation; CO(2) and NH(3) from carbamoyl phosphate: step 1/1. The protein is Carbamate kinase 2 (arcC2) of Staphylococcus aureus (strain MRSA252).